We begin with the raw amino-acid sequence, 122 residues long: uncharacterized protein (122 aa).

The signal sequence occupies residues 1-28 (MVPGPPESVVRFFLWFCFLLPPTRKASC). Asn49 carries N-linked (GlcNAc...) asparagine glycosylation.

It is found in the secreted. This is an uncharacterized protein from Homo sapiens (Human).